The chain runs to 247 residues: Cell division protein ZapD (247 aa).

It belongs to the ZapD family. As to quaternary structure, interacts with FtsZ.

It is found in the cytoplasm. Cell division factor that enhances FtsZ-ring assembly. Directly interacts with FtsZ and promotes bundling of FtsZ protofilaments, with a reduction in FtsZ GTPase activity. The chain is Cell division protein ZapD from Klebsiella pneumoniae (strain 342).